Reading from the N-terminus, the 291-residue chain is Beta-lactamase CTX-M-15 (291 aa).

An N-terminal signal peptide occupies residues 1–28 (MVKKSLRQFTLMATATVTLLLGSVPLYA). Serine 73 acts as the Nucleophile; acyl-ester intermediate in catalysis. Residues lysine 76, serine 133, glutamate 169, and serine 240 each coordinate a beta-lactam.

It belongs to the class-A beta-lactamase family. As to quaternary structure, monomer.

Its subcellular location is the secreted. The catalysed reaction is a beta-lactam + H2O = a substituted beta-amino acid. Inhibited by the beta-lactamase-blocking agents clavulanic acid and avibactam, via a covalent binding to Ser-73. Functionally, extended-spectrum beta-lactamase (ESBL) which confers resistance to penicillins, as well as first, second, third and fourth-generation cephalosporins. Has cefotaxime- and ceftazidime-hydrolyzing activity. Inactive against the carbapenem antibiotics, imipenem, meropenem and ertapenem. The protein is Beta-lactamase CTX-M-15 of Escherichia coli O25b:H4.